We begin with the raw amino-acid sequence, 144 residues long: MVAFTEKQDALVSSSFEAFKANIPQYSVVFYTSILEKAPAAKDLFSFLANGVDPTNPKLTGHAEKLFALVRDSAGQLKASGTVVADAALGSVHAQKAVTDPQFVVVKEALLKTIKAAVGDKWSDELSRAWEVAYDELAAAIKKA.

V2 is subject to N-acetylvaline. Residues 3-144 (AFTEKQDALV…DELAAAIKKA (142 aa)) enclose the Globin domain. Nitrated tyrosine is present on residues Y26 and Y31. S46 contributes to the heme b binding site. S46 is modified (phosphoserine). H62 serves as a coordination point for O2. Heme b is bound by residues K65, H93, and K96. Position 134 is a nitrated tyrosine (Y134).

The protein belongs to the plant globin family. As to quaternary structure, monomer. Post-translationally, nitrated mainly at Tyr-31 and, to a lower extent, at Tyr-26 and Tyr-134, in effective nodules and particularly in hypoxic conditions; this mechanism may play a protective role in the symbiosis by buffering toxic peroxynitrite NO(2)(-). Nitration level decrease during nodule senescence. Phosphorylation at Ser-46 disrupts the molecular environment of its porphyrin ring oxygen binding pocket, thus leading to a reduced oxygen consumption and to the delivery of oxygen O(2) to symbiosomes. In terms of tissue distribution, specifically expressed in root nodules.

The protein resides in the cytoplasm. The protein localises to the cytosol. Its subcellular location is the nucleus. Functionally, leghemoglobin that reversibly binds oxygen O(2) through a pentacoordinated heme iron. In root nodules, facilitates the diffusion of oxygen to the bacteroids while preventing the bacterial nitrogenase from being inactivated by buffering dioxygen, nitric oxide and carbon monoxide, and promoting the formation of reactive oxygen species (ROS, e.g. H(2)O(2)). This role is essential for symbiotic nitrogen fixation (SNF). In Glycine max (Soybean), this protein is Leghemoglobin 3.